The primary structure comprises 241 residues: ATP synthase subunit a (241 aa).

5 consecutive transmembrane segments (helical) span residues 23–43 (VSFTNSSLLMLLTVGLAAAFF), 83–103 (YFPYILTLFVFVFLGNMLGML), 113–133 (IAVTAALAVGIFIAVTIIGFA), 188–208 (VLAGFVIMLGVVGGVVPFAVV), and 209–229 (LGVTVLEFFIAALQAYVFTIL).

The protein belongs to the ATPase A chain family. F-type ATPases have 2 components, CF(1) - the catalytic core - and CF(0) - the membrane proton channel. CF(1) has five subunits: alpha(3), beta(3), gamma(1), delta(1), epsilon(1). CF(0) has four main subunits: a, b, b' and c.

It is found in the cell inner membrane. In terms of biological role, key component of the proton channel; it plays a direct role in the translocation of protons across the membrane. This Rhodospirillum rubrum (strain ATCC 11170 / ATH 1.1.1 / DSM 467 / LMG 4362 / NCIMB 8255 / S1) protein is ATP synthase subunit a.